Here is a 291-residue protein sequence, read N- to C-terminus: Probable xyloglucan endotransglucosylase/hydrolase protein 16 (291 aa).

The first 24 residues, 1–24 (MGRILNRTVLMTLLVVTMAGTAFS), serve as a signal peptide directing secretion. One can recognise a GH16 domain in the interval 25–215 (GSFNEEFDLT…WSKAPFTAYY (191 aa)). Glu-101 acts as the Nucleophile in catalysis. Glu-105 functions as the Proton donor in the catalytic mechanism. Glu-105 is a xyloglucan binding site. Residue Asn-109 is glycosylated (N-linked (GlcNAc...) asparagine). Xyloglucan is bound by residues 118–120 (HTN), 128–130 (NRE), 194–195 (DW), and Gly-199. 2 disulfide bridges follow: Cys-223/Cys-232 and Cys-272/Cys-286. A xyloglucan-binding site is contributed by Arg-277.

Belongs to the glycosyl hydrolase 16 family. XTH group 2 subfamily. Contains at least one intrachain disulfide bond essential for its enzymatic activity.

It localises to the secreted. The protein localises to the cell wall. The protein resides in the extracellular space. It is found in the apoplast. The enzyme catalyses breaks a beta-(1-&gt;4) bond in the backbone of a xyloglucan and transfers the xyloglucanyl segment on to O-4 of the non-reducing terminal glucose residue of an acceptor, which can be a xyloglucan or an oligosaccharide of xyloglucan.. Its function is as follows. Catalyzes xyloglucan endohydrolysis (XEH) and/or endotransglycosylation (XET). Cleaves and religates xyloglucan polymers, an essential constituent of the primary cell wall, and thereby participates in cell wall construction of growing tissues. The polypeptide is Probable xyloglucan endotransglucosylase/hydrolase protein 16 (XTH16) (Arabidopsis thaliana (Mouse-ear cress)).